A 293-amino-acid chain; its full sequence is Ribosomal RNA small subunit methyltransferase A (293 aa).

Residues N38, V40, G65, E86, D116, and N135 each coordinate S-adenosyl-L-methionine.

The protein belongs to the class I-like SAM-binding methyltransferase superfamily. rRNA adenine N(6)-methyltransferase family. RsmA subfamily.

It localises to the cytoplasm. The enzyme catalyses adenosine(1518)/adenosine(1519) in 16S rRNA + 4 S-adenosyl-L-methionine = N(6)-dimethyladenosine(1518)/N(6)-dimethyladenosine(1519) in 16S rRNA + 4 S-adenosyl-L-homocysteine + 4 H(+). In terms of biological role, specifically dimethylates two adjacent adenosines (A1518 and A1519) in the loop of a conserved hairpin near the 3'-end of 16S rRNA in the 30S particle. May play a critical role in biogenesis of 30S subunits. This chain is Ribosomal RNA small subunit methyltransferase A, found in Nocardia farcinica (strain IFM 10152).